An 82-amino-acid polypeptide reads, in one-letter code: Small ribosomal subunit protein bS16 (82 aa).

The protein belongs to the bacterial ribosomal protein bS16 family.

The polypeptide is Small ribosomal subunit protein bS16 (Erwinia tasmaniensis (strain DSM 17950 / CFBP 7177 / CIP 109463 / NCPPB 4357 / Et1/99)).